Reading from the N-terminus, the 480-residue chain is UDP-glycosyltransferase 72B1 (480 aa).

His19 (proton acceptor) is an active-site residue. The active-site Charge relay is Asp117. Ser277, Trp346, Ala347, and His364 together coordinate UDP. The UDP-alpha-D-glucose site is built by Ser277, Trp346, Ala347, His364, Trp367, Asn368, Ser369, Glu372, Tyr386, Glu388, and Gln389. UDP is bound by residues Asn368, Ser369, Glu372, and Tyr386.

Belongs to the UDP-glycosyltransferase family.

It catalyses the reaction hydroquinone + UDP-alpha-D-glucose = hydroquinone O-beta-D-glucopyranoside + UDP + H(+). Functionally, bifunctional O-glycosyltransferase and N-glycosyltransferase that can detoxify xenobiotics. Possesses high activity to metabolize the persistent pollutants 2,4,5-trichlorophenol (TCP) and 3,4-dichloroaniline (DCA). Also active on benzoates and benzoate derivatives in vitro. The sequence is that of UDP-glycosyltransferase 72B1 (UGT72B1) from Arabidopsis thaliana (Mouse-ear cress).